The following is a 189-amino-acid chain: Adenylate kinase (189 aa).

Position 10–15 (10–15 (AAGKGT)) interacts with ATP. An NMP region spans residues 30 to 59 (STGDMLRAAIASGSELGQKVKGVLDRGELV). AMP contacts are provided by residues Thr31, Arg36, 57-59 (ELV), 85-88 (GFPR), and Gln92. An LID region spans residues 126–136 (KRFAEQGRPDD). Position 127 (Arg127) interacts with ATP. Residues Arg133 and Arg144 each contribute to the AMP site. Residue Ala172 coordinates ATP.

Belongs to the adenylate kinase family. In terms of assembly, monomer.

It localises to the cytoplasm. The catalysed reaction is AMP + ATP = 2 ADP. It functions in the pathway purine metabolism; AMP biosynthesis via salvage pathway; AMP from ADP: step 1/1. Functionally, catalyzes the reversible transfer of the terminal phosphate group between ATP and AMP. Plays an important role in cellular energy homeostasis and in adenine nucleotide metabolism. This Caulobacter sp. (strain K31) protein is Adenylate kinase.